Reading from the N-terminus, the 132-residue chain is Interleukin-13 (132 aa).

Positions 1–18 (MALLLTTVIALTCLGGFA) are cleaved as a signal peptide. N-linked (GlcNAc...) asparagine glycosylation is found at N38, N49, N57, and N72. Intrachain disulfides connect C48–C76 and C64–C90.

It belongs to the IL-4/IL-13 family. In terms of assembly, interacts with IL13RA2.

Its subcellular location is the secreted. Cytokine that plays important roles in allergic inflammation and immune response to parasite infection. Synergizes with IL2 in regulating interferon-gamma synthesis. Stimulates B-cell proliferation, and activation of eosinophils, basophils, and mast cells. Plays an important role in controlling IL33 activity by modulating the production of transmembrane and soluble forms of interleukin-1 receptor-like 1/IL1RL1. Displays the capacity to antagonize Th1-driven proinflammatory immune response and downregulates synthesis of many proinflammatory cytokines including IL1, IL6, IL10, IL12 and TNF-alpha through a mechanism that partially involves suppression of NF-kappa-B. Also functions on nonhematopoietic cells, including endothelial cells where it induces vascular cell adhesion protein 1/VCAM1, which is important in the recruitment of eosinophils. Exerts its biological effects through its receptors which comprises the IL4R chain and the IL13RA1 chain, to activate JAK1 and TYK2, leading to the activation of STAT6. Aside from IL13RA1, another receptor IL13RA2 acts as a high affinity decoy for IL13 and mediates internalization and depletion of extracellular IL13. This Macaca mulatta (Rhesus macaque) protein is Interleukin-13 (IL13).